Consider the following 1293-residue polypeptide: Phosphoribosylformylglycinamidine synthase (1293 aa).

Residues 305-316 and Ala676 each bind ATP; that span reads GAATGSGGEIRD. The segment at 305–327 is disordered; that stretch reads GAATGSGGEIRDEGATGRGSKPK. Positions 677, 716, 720, and 884 each coordinate Mg(2+). Ser886 is a binding site for ATP. One can recognise a Glutamine amidotransferase type-1 domain in the interval 1040–1293; that stretch reads MAILREQGVN…MFRNARVNLG (254 aa). The Nucleophile role is filled by Cys1133. Catalysis depends on residues His1258 and Glu1260.

This sequence in the N-terminal section; belongs to the FGAMS family. In terms of assembly, monomer.

The protein resides in the cytoplasm. It carries out the reaction N(2)-formyl-N(1)-(5-phospho-beta-D-ribosyl)glycinamide + L-glutamine + ATP + H2O = 2-formamido-N(1)-(5-O-phospho-beta-D-ribosyl)acetamidine + L-glutamate + ADP + phosphate + H(+). The protein operates within purine metabolism; IMP biosynthesis via de novo pathway; 5-amino-1-(5-phospho-D-ribosyl)imidazole from N(2)-formyl-N(1)-(5-phospho-D-ribosyl)glycinamide: step 1/2. Phosphoribosylformylglycinamidine synthase involved in the purines biosynthetic pathway. Catalyzes the ATP-dependent conversion of formylglycinamide ribonucleotide (FGAR) and glutamine to yield formylglycinamidine ribonucleotide (FGAM) and glutamate. The polypeptide is Phosphoribosylformylglycinamidine synthase (Shewanella oneidensis (strain ATCC 700550 / JCM 31522 / CIP 106686 / LMG 19005 / NCIMB 14063 / MR-1)).